The chain runs to 273 residues: Dermonecrotic toxin LhSicTox-alphaIA2av (273 aa).

The active site involves histidine 5. Positions 25 and 27 each coordinate Mg(2+). Catalysis depends on histidine 41, which acts as the Nucleophile. Cystine bridges form between cysteine 45-cysteine 51 and cysteine 47-cysteine 190. Aspartate 85 contributes to the Mg(2+) binding site.

Belongs to the arthropod phospholipase D family. Class II subfamily. The cofactor is Mg(2+). As to expression, expressed by the venom gland.

It localises to the secreted. The enzyme catalyses an N-(acyl)-sphingosylphosphocholine = an N-(acyl)-sphingosyl-1,3-cyclic phosphate + choline. It carries out the reaction an N-(acyl)-sphingosylphosphoethanolamine = an N-(acyl)-sphingosyl-1,3-cyclic phosphate + ethanolamine. The catalysed reaction is a 1-acyl-sn-glycero-3-phosphocholine = a 1-acyl-sn-glycero-2,3-cyclic phosphate + choline. It catalyses the reaction a 1-acyl-sn-glycero-3-phosphoethanolamine = a 1-acyl-sn-glycero-2,3-cyclic phosphate + ethanolamine. Its function is as follows. Dermonecrotic toxins cleave the phosphodiester linkage between the phosphate and headgroup of certain phospholipids (sphingolipid and lysolipid substrates), forming an alcohol (often choline) and a cyclic phosphate. This toxin acts on sphingomyelin (SM). It may also act on ceramide phosphoethanolamine (CPE), lysophosphatidylcholine (LPC) and lysophosphatidylethanolamine (LPE), but not on lysophosphatidylserine (LPS), and lysophosphatidylglycerol (LPG). It acts by transphosphatidylation, releasing exclusively cyclic phosphate products as second products. Induces dermonecrosis, hemolysis, increased vascular permeability, edema, inflammatory response, and platelet aggregation. This chain is Dermonecrotic toxin LhSicTox-alphaIA2av, found in Loxosceles hirsuta (Recluse spider).